Reading from the N-terminus, the 333-residue chain is Anthranilate phosphoribosyltransferase (333 aa).

Residues G81, 84-85, T89, 91-94, 109-117, and A121 contribute to the 5-phospho-alpha-D-ribose 1-diphosphate site; these read GD, NIST, and KHGNRSVSS. G81 lines the anthranilate pocket. A Mg(2+)-binding site is contributed by S93. N112 contributes to the anthranilate binding site. R167 is an anthranilate binding site. 2 residues coordinate Mg(2+): D225 and E226.

This sequence belongs to the anthranilate phosphoribosyltransferase family. Homodimer. Mg(2+) is required as a cofactor.

The catalysed reaction is N-(5-phospho-beta-D-ribosyl)anthranilate + diphosphate = 5-phospho-alpha-D-ribose 1-diphosphate + anthranilate. It participates in amino-acid biosynthesis; L-tryptophan biosynthesis; L-tryptophan from chorismate: step 2/5. Functionally, catalyzes the transfer of the phosphoribosyl group of 5-phosphorylribose-1-pyrophosphate (PRPP) to anthranilate to yield N-(5'-phosphoribosyl)-anthranilate (PRA). The sequence is that of Anthranilate phosphoribosyltransferase from Actinobacillus succinogenes (strain ATCC 55618 / DSM 22257 / CCUG 43843 / 130Z).